The sequence spans 213 residues: Imidazole glycerol phosphate synthase subunit HisH (213 aa).

The region spanning 4 to 213 is the Glutamine amidotransferase type-1 domain; sequence SIAIVDYGMG…LYRNFVHWKP (210 aa). Cys-83 serves as the catalytic Nucleophile. Residues His-193 and Glu-195 contribute to the active site.

Heterodimer of HisH and HisF.

It localises to the cytoplasm. The enzyme catalyses 5-[(5-phospho-1-deoxy-D-ribulos-1-ylimino)methylamino]-1-(5-phospho-beta-D-ribosyl)imidazole-4-carboxamide + L-glutamine = D-erythro-1-(imidazol-4-yl)glycerol 3-phosphate + 5-amino-1-(5-phospho-beta-D-ribosyl)imidazole-4-carboxamide + L-glutamate + H(+). The catalysed reaction is L-glutamine + H2O = L-glutamate + NH4(+). The protein operates within amino-acid biosynthesis; L-histidine biosynthesis; L-histidine from 5-phospho-alpha-D-ribose 1-diphosphate: step 5/9. IGPS catalyzes the conversion of PRFAR and glutamine to IGP, AICAR and glutamate. The HisH subunit catalyzes the hydrolysis of glutamine to glutamate and ammonia as part of the synthesis of IGP and AICAR. The resulting ammonia molecule is channeled to the active site of HisF. The chain is Imidazole glycerol phosphate synthase subunit HisH from Burkholderia lata (strain ATCC 17760 / DSM 23089 / LMG 22485 / NCIMB 9086 / R18194 / 383).